A 147-amino-acid polypeptide reads, in one-letter code: Large ribosomal subunit protein bL9 (147 aa).

It belongs to the bacterial ribosomal protein bL9 family.

Its function is as follows. Binds to the 23S rRNA. The chain is Large ribosomal subunit protein bL9 from Exiguobacterium sp. (strain ATCC BAA-1283 / AT1b).